The chain runs to 636 residues: Eukaryotic peptide chain release factor GTP-binding subunit ERF3A (636 aa).

Gly residues-rich tracts occupy residues 1–16 and 103–116; these read MDPSSGGGGGGGGGGS and AAGGDHGAGSGAGG. 2 disordered regions span residues 1-54 and 90-206; these read MDPS…AAVA and LRGP…PPGA. A compositionally biased stretch (polar residues) spans 121–138; sequence VESSQDQSCEGSNSTVSM. A compositionally biased stretch (acidic residues) spans 183–193; the sequence is STQEMMEEEEE. Residues 209–435 enclose the tr-type G domain; that stretch reads KEHVNVVFIG…DNLPNFNRSV (227 aa). The segment at 218 to 225 is G1; it reads GHVDAGKS. Position 221 to 226 (221 to 226) interacts with GTP; it reads DAGKST. A G2 region spans residues 274 to 278; sequence GKTVE. The interval 295–298 is G3; it reads DAPG. GTP is bound by residues 357 to 360 and 399 to 401; these read NKMD and SGL. Residues 357 to 360 form a G4 region; sequence NKMD. The interval 399 to 401 is G5; that stretch reads SGL.

The protein belongs to the TRAFAC class translation factor GTPase superfamily. Classic translation factor GTPase family. ERF3 subfamily. As to quaternary structure, component of the eRF1-eRF3-GTP ternary complex, composed of ETF1/ERF1 and ERF3 (GSPT1/ERF3A or GSPT2/ERF3B) and GTP. Component of the transient SURF (SMG1-UPF1-eRF1-eRF3) complex. The ETF1-GSPT1 complex interacts with JMJD4. Interacts with PABPC1. Interacts with SHFL.

It carries out the reaction GTP + H2O = GDP + phosphate + H(+). GTPase component of the eRF1-eRF3-GTP ternary complex, a ternary complex that mediates translation termination in response to the termination codons UAA, UAG and UGA. GSPT1/ERF3A mediates ETF1/ERF1 delivery to stop codons: The eRF1-eRF3-GTP complex binds to a stop codon in the ribosomal A-site. GTP hydrolysis by GSPT1/ERF3A induces a conformational change that leads to its dissociation, permitting ETF1/ERF1 to accommodate fully in the A-site. Component of the transient SURF complex which recruits UPF1 to stalled ribosomes in the context of nonsense-mediated decay (NMD) of mRNAs containing premature stop codons. Required for SHFL-mediated translation termination which inhibits programmed ribosomal frameshifting (-1PRF) of mRNA from viruses and cellular genes. This Mus musculus (Mouse) protein is Eukaryotic peptide chain release factor GTP-binding subunit ERF3A (Gspt1).